The chain runs to 71 residues: Small ribosomal subunit protein bS21 (71 aa).

The disordered stretch occupies residues 38–71; the sequence is YEKPTTERKRARASAIKRHAKKLARENARRTRLY. A compositionally biased stretch (basic residues) spans 46–59; it reads KRARASAIKRHAKK. Basic and acidic residues predominate over residues 60–71; sequence LARENARRTRLY.

This sequence belongs to the bacterial ribosomal protein bS21 family.

This Hamiltonella defensa subsp. Acyrthosiphon pisum (strain 5AT) protein is Small ribosomal subunit protein bS21.